Reading from the N-terminus, the 265-residue chain is MQPDLHCRTLAAHTLKHFRALSPLTHCMTNDVVQTFTANTLLALGASPAMVIDPVEARPFAAIANALLVNVGTLTASRADAMRATVESAYDAKIPWTLDPVAVGALEFRRRFCLDLLSLRPAAIRGNASEILALSGMALGGRGVDTTEAALAALPAAQALARQIDCIVVVTGEIDYVTNGQRTLSIPGGDPLMTRIVGTGCALSAVVAASCALPGAALDNVASACCWMKLAGQAAAERSEGPGSFIPAFLDALYHLDVEAANATN.

Methionine 50 lines the substrate pocket. Positions 125 and 171 each coordinate ATP. Glycine 198 serves as a coordination point for substrate.

It belongs to the Thz kinase family. The cofactor is Mg(2+).

It catalyses the reaction 5-(2-hydroxyethyl)-4-methylthiazole + ATP = 4-methyl-5-(2-phosphooxyethyl)-thiazole + ADP + H(+). The protein operates within cofactor biosynthesis; thiamine diphosphate biosynthesis; 4-methyl-5-(2-phosphoethyl)-thiazole from 5-(2-hydroxyethyl)-4-methylthiazole: step 1/1. Its function is as follows. Catalyzes the phosphorylation of the hydroxyl group of 4-methyl-5-beta-hydroxyethylthiazole (THZ). This chain is Hydroxyethylthiazole kinase, found in Salmonella paratyphi B (strain ATCC BAA-1250 / SPB7).